Here is a 327-residue protein sequence, read N- to C-terminus: Dipeptide transport ATP-binding protein DppD (327 aa).

The region spanning 4 to 254 (LNVDKLSVHF…PRHPYTQALL (251 aa)) is the ABC transporter domain. An ATP-binding site is contributed by 40-47 (GESGSGKS).

The protein belongs to the ABC transporter superfamily. In terms of assembly, the complex is composed of two ATP-binding proteins (DppD and DppF), two transmembrane proteins (DppB and DppC) and a solute-binding protein (DppA). MppA can replace DppA as binding protein for heme and ALA transport.

It localises to the cell inner membrane. It carries out the reaction a dipeptide(out) + ATP + H2O = a dipeptide(in) + ADP + phosphate + H(+). In terms of biological role, part of the ABC transporter DppABCDF involved in dipeptide transport. Responsible for energy coupling to the transport system. Functionally, when a foreign outer membrane heme receptor is expressed in E.coli, DppABCDF can also transport heme and its precursor, 5-aminolevulinic acid (ALA), from the periplasm into the cytoplasm. This is Dipeptide transport ATP-binding protein DppD (dppD) from Escherichia coli (strain K12).